Reading from the N-terminus, the 205-residue chain is Holliday junction branch migration complex subunit RuvA (205 aa).

The domain I stretch occupies residues 1–64 (MIGKLKGVID…EDQIKLFGFR (64 aa)). The interval 65–143 (SDIEREWFRL…AFANVDPAVV (79 aa)) is domain II. The segment at 144–154 (HLAGAVDDDRA) is flexible linker. The domain III stretch occupies residues 154–205 (APRPVKDAISALVNLGYGQPQAAAAIASVARDAGEGAETAQLIRLGLKELAK).

Belongs to the RuvA family. As to quaternary structure, homotetramer. Forms an RuvA(8)-RuvB(12)-Holliday junction (HJ) complex. HJ DNA is sandwiched between 2 RuvA tetramers; dsDNA enters through RuvA and exits via RuvB. An RuvB hexamer assembles on each DNA strand where it exits the tetramer. Each RuvB hexamer is contacted by two RuvA subunits (via domain III) on 2 adjacent RuvB subunits; this complex drives branch migration. In the full resolvosome a probable DNA-RuvA(4)-RuvB(12)-RuvC(2) complex forms which resolves the HJ.

It localises to the cytoplasm. Its function is as follows. The RuvA-RuvB-RuvC complex processes Holliday junction (HJ) DNA during genetic recombination and DNA repair, while the RuvA-RuvB complex plays an important role in the rescue of blocked DNA replication forks via replication fork reversal (RFR). RuvA specifically binds to HJ cruciform DNA, conferring on it an open structure. The RuvB hexamer acts as an ATP-dependent pump, pulling dsDNA into and through the RuvAB complex. HJ branch migration allows RuvC to scan DNA until it finds its consensus sequence, where it cleaves and resolves the cruciform DNA. This Afipia carboxidovorans (strain ATCC 49405 / DSM 1227 / KCTC 32145 / OM5) (Oligotropha carboxidovorans) protein is Holliday junction branch migration complex subunit RuvA.